The sequence spans 503 residues: ATP synthase subunit alpha (503 aa).

170-177 provides a ligand contact to ATP; sequence GDKQTGKT.

This sequence belongs to the ATPase alpha/beta chains family. F-type ATPases have 2 components, CF(1) - the catalytic core - and CF(0) - the membrane proton channel. CF(1) has five subunits: alpha(3), beta(3), gamma(1), delta(1), epsilon(1). CF(0) has three main subunits: a(1), b(2) and c(9-12). The alpha and beta chains form an alternating ring which encloses part of the gamma chain. CF(1) is attached to CF(0) by a central stalk formed by the gamma and epsilon chains, while a peripheral stalk is formed by the delta and b chains.

Its subcellular location is the cell inner membrane. It carries out the reaction ATP + H2O + 4 H(+)(in) = ADP + phosphate + 5 H(+)(out). Functionally, produces ATP from ADP in the presence of a proton gradient across the membrane. The alpha chain is a regulatory subunit. The chain is ATP synthase subunit alpha from Helicobacter pylori (strain Shi470).